The sequence spans 99 residues: Probable small ribosomal subunit protein cS23 (99 aa).

It belongs to the chloroplast-specific ribosomal protein cS23 family. As to quaternary structure, part of the 30S ribosomal subunit.

In terms of biological role, probably a ribosomal protein or a ribosome-associated protein. The chain is Probable small ribosomal subunit protein cS23 from Synechococcus sp. (strain JA-3-3Ab) (Cyanobacteria bacterium Yellowstone A-Prime).